The chain runs to 67 residues: Protein AaeX (67 aa).

2 helical membrane passes run 9–29 and 47–67; these read IFGL…ALFF and PALF…CLFV.

This sequence belongs to the AaeX family.

The protein resides in the cell membrane. This is Protein AaeX from Serratia marcescens.